The chain runs to 237 residues: Ribosomal RNA small subunit methyltransferase G (237 aa).

S-adenosyl-L-methionine is bound by residues Gly-76, Phe-81, 128 to 129 (IE), and Arg-147.

This sequence belongs to the methyltransferase superfamily. RNA methyltransferase RsmG family.

Its subcellular location is the cytoplasm. In terms of biological role, specifically methylates the N7 position of a guanine in 16S rRNA. This chain is Ribosomal RNA small subunit methyltransferase G, found in Prochlorococcus marinus (strain MIT 9301).